The following is a 209-amino-acid chain: ATP phosphoribosyltransferase (209 aa).

It belongs to the ATP phosphoribosyltransferase family. Short subfamily. Heteromultimer composed of HisG and HisZ subunits.

The protein localises to the cytoplasm. The catalysed reaction is 1-(5-phospho-beta-D-ribosyl)-ATP + diphosphate = 5-phospho-alpha-D-ribose 1-diphosphate + ATP. It participates in amino-acid biosynthesis; L-histidine biosynthesis; L-histidine from 5-phospho-alpha-D-ribose 1-diphosphate: step 1/9. In terms of biological role, catalyzes the condensation of ATP and 5-phosphoribose 1-diphosphate to form N'-(5'-phosphoribosyl)-ATP (PR-ATP). Has a crucial role in the pathway because the rate of histidine biosynthesis seems to be controlled primarily by regulation of HisG enzymatic activity. In Sulfurimonas denitrificans (strain ATCC 33889 / DSM 1251) (Thiomicrospira denitrificans (strain ATCC 33889 / DSM 1251)), this protein is ATP phosphoribosyltransferase.